Consider the following 66-residue polypeptide: Disk-determining factor A (66 aa).

Its function is as follows. Involved in cell-shape determination. Required for the formation of disks. In Haloferax volcanii (strain ATCC 29605 / DSM 3757 / JCM 8879 / NBRC 14742 / NCIMB 2012 / VKM B-1768 / DS2) (Halobacterium volcanii), this protein is Disk-determining factor A.